The sequence spans 930 residues: F-box only protein 11 (930 aa).

The interval 1–150 is disordered; the sequence is MNSVRAANRR…RVSGKSQDLS (150 aa). The segment covering 7 to 16 has biased composition (basic residues); it reads ANRRPRRVSR. Low complexity predominate over residues 17 to 27; it reads PRPVQQQQQQP. Pro residues predominate over residues 28–73; the sequence is PQQPPPQPPQQQPPPQPPQQPPQQQPPPPPQQQPPPPPPPPPPPPQ. Over residues 117–132 the composition is skewed to polar residues; the sequence is PTKSSMEGASTSTTEN. The F-box domain occupies 156-202; that stretch reads QYLQEKLPDEVVLKIFSYLLEQDLCRAACVCKRFSELANDPILWKRL. PbH1 repeat units lie at residues 398–420, 421–443, 444–466, 467–489, 490–512, 513–535, 536–558, 559–581, 582–604, 605–627, 628–650, 651–673, 674–696, 697–719, 720–742, 743–765, 766–788, 789–811, and 812–833; these read GACPTIKHCNISDCENVGLYITD, HAQGIYEDNEISNNALAGIWVKN, HGNPIIRRNHIHHGRDVGVFTFD, HGMGYFESCNIHRNRIAGFEVKA, YANPTVVRCEIHHGQTGGIYVHE, KGRGQFIENKIYANNFAGVWITS, NSDPTIRGNSIFNGNQGGVYIFG, DGRGLIEGNDIYGNALAGIQIRT, NSCPIVRHNKIHDGQHGGIYVHE, KGQGVIEENEVYSNTLAGVWVTT, GSTPVLRRNRIHSGKQVGVYFYD, NGHGVLEDNDIYNHMYSGVQIRT, GSNPKIRRNKIWGGQNGGILVYN, SGLGCIEDNEIFDNAMAGVWIKT, DSNPTLRRNKIHDGRDGGICIFN, GGRGLLEENDIFRNAQAGVLIST, NSHPVLRKNRIFDGFAAGIEITN, HATATLEGNQIFNNRFGGLFLAS, and GVNVTMKDNKIMNNQDAIEKAV. Residues 836–907 form a UBR-type zinc finger; the sequence is GQCLYKISSY…LSNPCTLAGE (72 aa).

In terms of assembly, component of the SCF(FBXO11) complex consisting of CUL1, RBX1, SKP1 and FBXO11. Interacts with CIITA. At 9.5 dpc and 10.5 dpc, expression is restricted to developing heart tissue. By 11.5 dpc and 12.5 dpc, detected in liver and subsequently in muscle by 13.5 dpc. At 14.5 dpc, still detected in heart, liver and muscle and also in the developing secondary palate including the nasal, medial and oral epithelia of the palatal shelves. At 15.5 dpc and 16.5 dpc, expressed in lung, kidney, heart, liver, muscle and adrenal gland. At this time, fusion of the palate shelves has occurred, with expression confined to the nasal and oral epithelia. At 17.5 dpc, expression in the lung is confined to bronchial epithelial cells and is evident in bone marrow, skin, tissue macrophages, osteoblasts, kidney, liver and spleen. At 18.5 dpc, expressed in bone marrow, liver, kidney and muscle but decreases in heart and lung. At this time, first detected in the middle ear epithelium. At the newborn stage, expression is strong in the middle ear where it is confined to mucin-secreting cells, as well as persisting in bone marrow, kidney and liver. Middle ear expression persists in postnatal head tissue at 4 and 13 days after birth and has declined by 21 days after birth. In the adult, expression is seen in alveolar macrophages of the lung, glomeruli and collecting tubules of the kidney, midbrain, heart and muscle.

Its subcellular location is the nucleus. The protein localises to the chromosome. Its pathway is protein modification; protein ubiquitination. Substrate recognition component of a SCF (SKP1-CUL1-F-box protein) E3 ubiquitin-protein ligase complex which mediates the ubiquitination and subsequent proteasomal degradation of target proteins, such as DTL/CDT2, BCL6, SNAI1 and PRDM1/BLIMP1. The SCF(FBXO11) complex mediates ubiquitination and degradation of BCL6, thereby playing a role in the germinal center B-cells terminal differentiation toward memory B-cells and plasma cells. The SCF(FBXO11) complex also mediates ubiquitination and degradation of DTL, an important step for the regulation of TGF-beta signaling, cell migration and the timing of the cell-cycle progression and exit. The SCF(FBXO11) complex also catalyzes ubiquitination and degradation of GSK3B-phosphorylated SNAI1. Binds to and neddylates phosphorylated p53/TP53, inhibiting its transcriptional activity. Plays a role in the regulatiom of erythropoiesis but not myelopoiesis or megakaryopoiesis. Mechanistically, activates erythroid genes by mediating the degradation of BAHD1, a heterochromatin-associated protein that recruits corepressors to H3K27me3 marks. Participates in macrophage cell death and inflammation in response to bacterial toxins by regulating the expression of complement 5a receptor 1/C5AR1 and IL-1beta. Acts as a critical regulator to determine the level of MHC-II by mediating the recognition of degron at the P/S/T domain of CIITA leading to its ubiquitination and subsequent degradation via the proteasome. Participates in the antiviral repsonse by initiating the activation of TBK1-IRF3-IFN-I axis. Mediates the 'Lys-63'-linked ubiquitination of TRAF3 to strengthen the interaction between TRAF3 and TBK1. The chain is F-box only protein 11 from Mus musculus (Mouse).